We begin with the raw amino-acid sequence, 435 residues long: Methylenetetrahydrofolate--tRNA-(uracil-5-)-methyltransferase TrmFO (435 aa).

An FAD-binding site is contributed by 9–14 (GAGLAG).

It belongs to the MnmG family. TrmFO subfamily. FAD is required as a cofactor.

Its subcellular location is the cytoplasm. The catalysed reaction is uridine(54) in tRNA + (6R)-5,10-methylene-5,6,7,8-tetrahydrofolate + NADH + H(+) = 5-methyluridine(54) in tRNA + (6S)-5,6,7,8-tetrahydrofolate + NAD(+). It carries out the reaction uridine(54) in tRNA + (6R)-5,10-methylene-5,6,7,8-tetrahydrofolate + NADPH + H(+) = 5-methyluridine(54) in tRNA + (6S)-5,6,7,8-tetrahydrofolate + NADP(+). Functionally, catalyzes the folate-dependent formation of 5-methyl-uridine at position 54 (M-5-U54) in all tRNAs. This chain is Methylenetetrahydrofolate--tRNA-(uracil-5-)-methyltransferase TrmFO, found in Staphylococcus aureus (strain JH1).